We begin with the raw amino-acid sequence, 704 residues long: DNA-directed DNA polymerase (704 aa).

Positions 1–187 (MIVSDIEANA…TKALLEKLLS (187 aa)) are 3'-5'exonuclease. Positions 5, 7, and 174 each coordinate Mg(2+). Residues 202-704 (GYTTFWSESL…KMGPNWAICH (503 aa)) form a polymerase region. Residues 262–338 (GSWYQPKGGT…VEHVVFNPSS (77 aa)) are binding to host TrxA. The Mg(2+) site is built by aspartate 475 and alanine 476. The substrate site is built by histidine 506, arginine 518, lysine 522, and tyrosine 526. Aspartate 654 lines the Mg(2+) pocket.

This sequence belongs to the DNA polymerase type-A family. As to quaternary structure, composed of two subunits. One is encoded by the phage and the other is encoded by the host thioredoxin. Interacts with DNA primase/helicase; this interaction is essential for the coordination of DNA unwinding and nucleotide polymerization on duplex DNA. Interacts with the ssDNA-binding protein. Part of the replicase complex that includes the DNA polymerase, thioredoxin, the primase/helicase and the single-stranded DNA binding protein. The cofactor is Mg(2+).

The enzyme catalyses DNA(n) + a 2'-deoxyribonucleoside 5'-triphosphate = DNA(n+1) + diphosphate. Its function is as follows. Replicates viral genomic DNA. This polymerase possesses two enzymatic activities: DNA synthesis (polymerase) and an exonucleolytic activity that degrades single-stranded DNA in the 3'-5' direction. Non-processive DNA polymerase that achieves processivity by binding to host thioredoxin (TrxA). This interaction increases the rate of dNTP incorporation to yield a processivity of approximately 800 nucleotides (nt) per binding event. Interacts with DNA helicase gp4 to coordinate nucleotide polymerization with unwinding of the DNA. The leading strand is synthesized continuously while synthesis of the lagging strand requires the synthesis of oligoribonucleotides by the primase domain of gp4. This is DNA-directed DNA polymerase from Escherichia phage T7 (Bacteriophage T7).